Reading from the N-terminus, the 316-residue chain is C1GALT1-specific chaperone 1 (316 aa).

Residues 1 to 6 (MLSESS) lie on the Cytoplasmic side of the membrane. The helical; Signal-anchor for type II membrane protein transmembrane segment at 7 to 26 (SFLKGVMLGSIFCALITMLG) threads the bilayer. Over 27–316 (HIRIGNRMHH…FLPPNGSEND (290 aa)) the chain is Lumenal.

Belongs to the glycosyltransferase 31 family. Beta3-Gal-T subfamily. Associates with core 1 beta-3-galactosyltransferase (C1GALT1), probably not with the soluble active form.

The protein localises to the membrane. Probable chaperone required for the generation of 1 O-glycan Gal-beta1-3GalNAc-alpha1-Ser/Thr (T antigen), which is a precursor for many extended O-glycans in glycoproteins. Probably acts as a specific molecular chaperone assisting the folding/stability of core 1 beta-3-galactosyltransferase (C1GALT1). This Rattus norvegicus (Rat) protein is C1GALT1-specific chaperone 1 (C1galt1c1).